The following is a 126-amino-acid chain: Holo-[acyl-carrier-protein] synthase (126 aa).

Mg(2+) contacts are provided by aspartate 9 and glutamate 58.

It belongs to the P-Pant transferase superfamily. AcpS family. Mg(2+) serves as cofactor.

Its subcellular location is the cytoplasm. It carries out the reaction apo-[ACP] + CoA = holo-[ACP] + adenosine 3',5'-bisphosphate + H(+). Its function is as follows. Transfers the 4'-phosphopantetheine moiety from coenzyme A to a Ser of acyl-carrier-protein. This is Holo-[acyl-carrier-protein] synthase from Erwinia tasmaniensis (strain DSM 17950 / CFBP 7177 / CIP 109463 / NCPPB 4357 / Et1/99).